The chain runs to 252 residues: 5'-nucleotidase SurE (252 aa).

Asp-8, Asp-9, Ser-40, and Asn-92 together coordinate a divalent metal cation.

This sequence belongs to the SurE nucleotidase family. A divalent metal cation is required as a cofactor.

It is found in the cytoplasm. The catalysed reaction is a ribonucleoside 5'-phosphate + H2O = a ribonucleoside + phosphate. Its function is as follows. Nucleotidase that shows phosphatase activity on nucleoside 5'-monophosphates. The polypeptide is 5'-nucleotidase SurE (Mesorhizobium japonicum (strain LMG 29417 / CECT 9101 / MAFF 303099) (Mesorhizobium loti (strain MAFF 303099))).